The chain runs to 484 residues: Cysteine--tRNA ligase (484 aa).

C29 lines the Zn(2+) pocket. The short motif at 31 to 41 (ITVYDYCHLGH) is the 'HIGH' region element. Zn(2+) is bound by residues C215, H240, and E244. The 'KMSKS' region signature appears at 272 to 276 (KMSKS). Position 275 (K275) interacts with ATP.

It belongs to the class-I aminoacyl-tRNA synthetase family. In terms of assembly, monomer. It depends on Zn(2+) as a cofactor.

The protein localises to the cytoplasm. It carries out the reaction tRNA(Cys) + L-cysteine + ATP = L-cysteinyl-tRNA(Cys) + AMP + diphosphate. The sequence is that of Cysteine--tRNA ligase from Rippkaea orientalis (strain PCC 8801 / RF-1) (Cyanothece sp. (strain PCC 8801)).